The following is a 572-amino-acid chain: Urease subunit alpha (572 aa).

Ni(2+) is bound by residues H139, H141, and K222. K222 is subject to N6-carboxylysine. Residue H224 coordinates substrate. Positions 251 and 277 each coordinate Ni(2+). H325 acts as the Proton donor in catalysis. Position 365 (D365) interacts with Ni(2+).

This sequence belongs to the metallo-dependent hydrolases superfamily. Urease alpha subunit family. As to quaternary structure, heterotrimer of UreA (gamma), UreB (beta) and UreC (alpha) subunits. Three heterotrimers associate to form the active enzyme. It depends on Ni cation as a cofactor. In terms of processing, carboxylation allows a single lysine to coordinate two nickel ions.

It is found in the cytoplasm. The catalysed reaction is urea + 2 H2O + H(+) = hydrogencarbonate + 2 NH4(+). It participates in nitrogen metabolism; urea degradation; CO(2) and NH(3) from urea (urease route): step 1/1. The protein is Urease subunit alpha of Acetivibrio thermocellus (strain ATCC 27405 / DSM 1237 / JCM 9322 / NBRC 103400 / NCIMB 10682 / NRRL B-4536 / VPI 7372) (Clostridium thermocellum).